The primary structure comprises 480 residues: Phosphomethylpyrimidine synthase (480 aa).

Substrate-binding positions include Asn-66, Met-95, Tyr-124, His-159, 179–181 (SRG), 220–223 (DGLR), and Glu-259. A Zn(2+)-binding site is contributed by His-263. Tyr-286 serves as a coordination point for substrate. Residue His-327 participates in Zn(2+) binding. Residues Cys-407, Cys-410, and Cys-415 each coordinate [4Fe-4S] cluster. Positions 426 to 480 (DGDMESIEADADDRTPLEDSSAAAVNRPPVGTHDGADIPGPDADMPADTEGSADD) are disordered. Residues 470 to 480 (MPADTEGSADD) are compositionally biased toward acidic residues.

It belongs to the ThiC family. [4Fe-4S] cluster is required as a cofactor.

The enzyme catalyses 5-amino-1-(5-phospho-beta-D-ribosyl)imidazole + S-adenosyl-L-methionine = 4-amino-2-methyl-5-(phosphooxymethyl)pyrimidine + CO + 5'-deoxyadenosine + formate + L-methionine + 3 H(+). It participates in cofactor biosynthesis; thiamine diphosphate biosynthesis. Its function is as follows. Catalyzes the synthesis of the hydroxymethylpyrimidine phosphate (HMP-P) moiety of thiamine from aminoimidazole ribotide (AIR) in a radical S-adenosyl-L-methionine (SAM)-dependent reaction. The polypeptide is Phosphomethylpyrimidine synthase (Haloarcula marismortui (strain ATCC 43049 / DSM 3752 / JCM 8966 / VKM B-1809) (Halobacterium marismortui)).